The chain runs to 174 residues: MILEVRKFQVKNKAVYIGTLSEDKIFGIIFSIDEPEVIRHRIPTLINFLEKRLNKKLEIKEGNSGFSDVVFKTLIGKISNEEAAEFIEVSYLTKFERKLYIYLVENVKRGEVITYGELAKILNTSSRAVGAAVKRNPYPIIVPCHRVIGRKNPYLYTPKPEYKKFLLEVEGWTS.

Cys144 serves as the catalytic Nucleophile; methyl group acceptor.

The protein belongs to the MGMT family.

The protein localises to the cytoplasm. The enzyme catalyses a 6-O-methyl-2'-deoxyguanosine in DNA + L-cysteinyl-[protein] = S-methyl-L-cysteinyl-[protein] + a 2'-deoxyguanosine in DNA. It catalyses the reaction a 4-O-methyl-thymidine in DNA + L-cysteinyl-[protein] = a thymidine in DNA + S-methyl-L-cysteinyl-[protein]. Functionally, involved in the cellular defense against the biological effects of O6-methylguanine (O6-MeG) and O4-methylthymine (O4-MeT) in DNA. Repairs the methylated nucleobase in DNA by stoichiometrically transferring the methyl group to a cysteine residue in the enzyme. This is a suicide reaction: the enzyme is irreversibly inactivated. The protein is Methylated-DNA--protein-cysteine methyltransferase of Pyrococcus furiosus (strain ATCC 43587 / DSM 3638 / JCM 8422 / Vc1).